Here is a 193-residue protein sequence, read N- to C-terminus: LOB domain-containing protein 12 (193 aa).

An LOB domain is found at 7 to 108 (SPCASCKLLR…MQLAVAQAEI (102 aa)).

Belongs to the LOB domain-containing protein family. In terms of tissue distribution, expressed predominantly in roots, and at low levels in shoots, floral stems and open flowers.

The chain is LOB domain-containing protein 12 (LBD12) from Arabidopsis thaliana (Mouse-ear cress).